Reading from the N-terminus, the 118-residue chain is Acidic phospholipase A2 CM-I (118 aa).

7 cysteine pairs are disulfide-bonded: Cys-11–Cys-70, Cys-26–Cys-117, Cys-28–Cys-44, Cys-43–Cys-98, Cys-50–Cys-91, Cys-59–Cys-84, and Cys-77–Cys-89. Tyr-27, Gly-29, and Gly-31 together coordinate Ca(2+). Residue His-47 is part of the active site. Asp-48 contacts Ca(2+). The active site involves Asp-92.

Belongs to the phospholipase A2 family. Group I subfamily. D49 sub-subfamily. It depends on Ca(2+) as a cofactor. As to expression, expressed by the venom gland.

Its subcellular location is the secreted. The catalysed reaction is a 1,2-diacyl-sn-glycero-3-phosphocholine + H2O = a 1-acyl-sn-glycero-3-phosphocholine + a fatty acid + H(+). In terms of biological role, snake venom phospholipase A2 (PLA2) that causes myonecrosis when injected intramuscularly, shows indirect hemolytic activity, abolishes twitches evoked by indirect stimulation earlier than those by direct stimulation (in the mouse phrenic nerve-diaphragm preparation) but does not produce complete neuromuscular block (up to 30 ug/ml) (in the chick biventer cervicis nerve-muscle preparation). PLA2 catalyzes the calcium-dependent hydrolysis of the 2-acyl groups in 3-sn-phosphoglycerides. The protein is Acidic phospholipase A2 CM-I of Naja mossambica (Mozambique spitting cobra).